Consider the following 414-residue polypeptide: MALISLAIDYKKSPIEVRSEFALSGLDVSMLYRSILAIDNVVHAVILSTCNRTEVYLEISDLRVVDDILVWWQGYVRNPNYKIKDYFKLRQGTEVIMHLMKLACGLESMVLGEPQILGQVKDSYTLSKKNHAIGKELDRVFQKVFATAKRVRSETRIGYCPVSVAFSAITLAKRQLDNICSKNVLIIGAGQTGELLFRHVTALAPKQIMLANRTIEKAQKITSAFRNASAHYLSELPQLIKKADIIIAAVNVSEYIVTCKDVGDKPRVFIDISIPQALDPKLGELEQNVYYCVDDINAVIEDNKDKRKYESSKAQKIIVKSLEEYLEKEKAIISNSAIKELFQKADGLVDLSLEKSLAKIRNGKDAEEIIKRFAYEIKKKVLHYPVVGMKEASKQGRSDCLVCMKRMFGLNVEK.

Substrate contacts are provided by residues 49–52, Ser108, 113–115, and Gln119; these read TCNR and EPQ. Cys50 acts as the Nucleophile in catalysis. 188-193 lines the NADP(+) pocket; it reads GAGQTG.

This sequence belongs to the glutamyl-tRNA reductase family. As to quaternary structure, homodimer.

It catalyses the reaction (S)-4-amino-5-oxopentanoate + tRNA(Glu) + NADP(+) = L-glutamyl-tRNA(Glu) + NADPH + H(+). The protein operates within porphyrin-containing compound metabolism; protoporphyrin-IX biosynthesis; 5-aminolevulinate from L-glutamyl-tRNA(Glu): step 1/2. Functionally, catalyzes the NADPH-dependent reduction of glutamyl-tRNA(Glu) to glutamate 1-semialdehyde (GSA). This Francisella tularensis subsp. novicida (strain U112) protein is Glutamyl-tRNA reductase.